A 528-amino-acid chain; its full sequence is GTPase Der (528 aa).

2 stretches are compositionally biased toward acidic residues: residues 1–12 (MDVEGAFADEEE) and 30–62 (GYDD…PDFG). Residues 1-62 (MDVEGAFADE…EDDFAAPDFG (62 aa)) form a disordered region. EngA-type G domains lie at 90–253 (CTVA…PEEP) and 263–436 (RRVA…ENWD). Residues 96 to 103 (GRPNVGKS), 143 to 147 (DTGGW), 205 to 208 (NKFD), 269 to 276 (GKPNVGKS), 316 to 320 (DTAGL), and 381 to 384 (NKWD) each bind GTP. One can recognise a KH-like domain in the interval 437–519 (RRVSTGQLNN…PIRIAVRVRE (83 aa)).

The protein belongs to the TRAFAC class TrmE-Era-EngA-EngB-Septin-like GTPase superfamily. EngA (Der) GTPase family. As to quaternary structure, associates with the 50S ribosomal subunit.

In terms of biological role, GTPase that plays an essential role in the late steps of ribosome biogenesis. The chain is GTPase Der from Corynebacterium efficiens (strain DSM 44549 / YS-314 / AJ 12310 / JCM 11189 / NBRC 100395).